We begin with the raw amino-acid sequence, 548 residues long: Formyltransferase/hydrolase complex Fhc subunit A (548 aa).

3 residues coordinate Zn(2+): His-57, His-59, and His-227.

The protein belongs to the metallo-dependent hydrolases superfamily. FwdA/FmdA family. Octaheteromer. Part of the formyltransferase/hydrolase complex fhc; composed of FhcA, FhcB, FhcC and FhcD. Zn(2+) is required as a cofactor.

The protein resides in the cytoplasm. It catalyses the reaction N-formylmethanofuran + H2O = methanofuran + formate. Its pathway is one-carbon metabolism; formaldehyde degradation; formate from formaldehyde (H(4)MPT route): step 4/5. Involved in the transformation of 5-formyl tetrahydromethanopterin (5-formyl-H(4)MPT) to methanofuran (MFR) and formate via the formylmethanofuran (formyl-MFR). May be catalyze the hydrolysis of formylmethanofuran (formyl-MFR) to yield formate and MFR. The protein is Formyltransferase/hydrolase complex Fhc subunit A (fhcA) of Methylorubrum extorquens (strain ATCC 14718 / DSM 1338 / JCM 2805 / NCIMB 9133 / AM1) (Methylobacterium extorquens).